Here is a 167-residue protein sequence, read N- to C-terminus: G/U mismatch-specific DNA glycosylase (167 aa).

It belongs to the uracil-DNA glycosylase (UDG) superfamily. TDG/mug family. As to quaternary structure, binds DNA as a monomer.

Its subcellular location is the cytoplasm. It catalyses the reaction Specifically hydrolyzes mismatched double-stranded DNA and polynucleotides, releasing free uracil.. Its function is as follows. Excises ethenocytosine and uracil, which can arise by alkylation or deamination of cytosine, respectively, from the corresponding mispairs with guanine in ds-DNA. It is capable of hydrolyzing the carbon-nitrogen bond between the sugar-phosphate backbone of the DNA and the mispaired base. The complementary strand guanine functions in substrate recognition. Required for DNA damage lesion repair in stationary-phase cells. The polypeptide is G/U mismatch-specific DNA glycosylase (Pectobacterium carotovorum subsp. carotovorum (strain PC1)).